The sequence spans 39 residues: Anthranilate phosphoribosyltransferase (39 aa).

This sequence belongs to the anthranilate phosphoribosyltransferase family. As to quaternary structure, homodimer.

It carries out the reaction N-(5-phospho-beta-D-ribosyl)anthranilate + diphosphate = 5-phospho-alpha-D-ribose 1-diphosphate + anthranilate. Its pathway is amino-acid biosynthesis; L-tryptophan biosynthesis; L-tryptophan from chorismate: step 2/5. Catalyzes the transfer of the phosphoribosyl group of 5-phosphorylribose-1-pyrophosphate (PRPP) to anthranilate to yield N-(5'-phosphoribosyl)-anthranilate (PRA). The protein is Anthranilate phosphoribosyltransferase (trpD) of Pectobacterium carotovorum (Erwinia carotovora).